The chain runs to 67 residues: MATVIVGDSESFEKAMKRFKKVVEREGILSELKRREFYEKPSQKKKRKERAARKRLLKAMKKKRVAL.

The protein belongs to the bacterial ribosomal protein bS21 family.

The polypeptide is Small ribosomal subunit protein bS21 (Hydrogenobaculum sp. (strain Y04AAS1)).